Reading from the N-terminus, the 898-residue chain is Vacuolar membrane protease (898 aa).

Topologically, residues 1–14 (MGIVDYLVAAVSFR) are cytoplasmic. The helical transmembrane segment at 15-35 (TLPTTFVAVLVYLAIFISVLI) threads the bilayer. Residues 36 to 342 (TDELPATPKD…LFGQALIVFP (307 aa)) are Vacuolar-facing. 3 N-linked (GlcNAc...) asparagine glycosylation sites follow: N50, N103, and N110. Zn(2+)-binding residues include H139 and D151. Catalysis depends on E183, which acts as the Proton acceptor. Residue E184 participates in Zn(2+) binding. N200 carries an N-linked (GlcNAc...) asparagine glycan. Zn(2+)-binding residues include E209 and H284. A helical transmembrane segment spans residues 343–365 (LSAMITFNIVFLVVGPIMLALLV). Over 366–411 (TFDIVARHRRQEMIGGGYEEQGFFARAWTSFKSFRWVGGFWKHAKF) the chain is Cytoplasmic. Residues 412–432 (WVALAVTVGLQVLLCVGYLYI) form a helical membrane-spanning segment. Residue N433 is a topological domain, vacuolar. The chain crosses the membrane as a helical span at residues 434-454 (PLIAYSSSHIVLLSFLSLAYL). Over 455 to 479 (STYLVHNIPSPTDTYGSHLPEQQKQ) the chain is Cytoplasmic. A helical membrane pass occupies residues 480 to 500 (AALFQLYFFTWILLLAATVVG). Over 501 to 509 (AKLSVGSFY) the chain is Vacuolar. A helical transmembrane segment spans residues 510 to 530 (ILSLWNAVLFAACAIGSIAGL). Residues 531–593 (LSSHTVEGDA…PGGKEGEEVS (63 aa)) are Cytoplasmic-facing. A helical membrane pass occupies residues 594-614 (GAIGWWFVQFVLSVPAVVILV). Topologically, residues 615-635 (SQLALLMLAATEQTLADGSPA) are vacuolar. Residues 636–656 (VTVYGGASLMSVLAILPLAPF) traverse the membrane as a helical segment. Residues 657-664 (ACKLHRRV) lie on the Cytoplasmic side of the membrane. A helical membrane pass occupies residues 665-685 (AYVALVVLIASTAYAWLVFPF). Residues 686–898 (SERAPLKVFF…LVEGYKAFAV (213 aa)) lie on the Vacuolar side of the membrane. N-linked (GlcNAc...) asparagine glycosylation is found at N704, N733, and N764.

This sequence belongs to the peptidase M28 family. Zn(2+) serves as cofactor.

The protein localises to the vacuole membrane. Its function is as follows. May be involved in vacuolar sorting and osmoregulation. The polypeptide is Vacuolar membrane protease (Schizophyllum commune (strain H4-8 / FGSC 9210) (Split gill fungus)).